The following is a 318-amino-acid chain: tRNA uridine(34) hydroxylase (318 aa).

Residues 123 to 217 form the Rhodanese domain; it reads EDDDTVIIDA…YGKDPETKSE (95 aa). C177 (cysteine persulfide intermediate) is an active-site residue.

This sequence belongs to the TrhO family.

The catalysed reaction is uridine(34) in tRNA + AH2 + O2 = 5-hydroxyuridine(34) in tRNA + A + H2O. Catalyzes oxygen-dependent 5-hydroxyuridine (ho5U) modification at position 34 in tRNAs. This is tRNA uridine(34) hydroxylase from Staphylococcus aureus (strain COL).